A 374-amino-acid chain; its full sequence is Alanine racemase (374 aa).

Lys34 serves as the catalytic Proton acceptor; specific for D-alanine. Position 34 is an N6-(pyridoxal phosphate)lysine (Lys34). A substrate-binding site is contributed by Arg147. Tyr271 (proton acceptor; specific for L-alanine) is an active-site residue. Residue Met319 coordinates substrate.

Belongs to the alanine racemase family. Requires pyridoxal 5'-phosphate as cofactor.

It carries out the reaction L-alanine = D-alanine. Its pathway is amino-acid biosynthesis; D-alanine biosynthesis; D-alanine from L-alanine: step 1/1. In terms of biological role, catalyzes the interconversion of L-alanine and D-alanine. May also act on other amino acids. This Haemophilus ducreyi (strain 35000HP / ATCC 700724) protein is Alanine racemase (alr).